An 87-amino-acid chain; its full sequence is Small ribosomal subunit protein uS17 (87 aa).

This sequence belongs to the universal ribosomal protein uS17 family. As to quaternary structure, part of the 30S ribosomal subunit.

Functionally, one of the primary rRNA binding proteins, it binds specifically to the 5'-end of 16S ribosomal RNA. This chain is Small ribosomal subunit protein uS17, found in Macrococcus caseolyticus (strain JCSC5402) (Macrococcoides caseolyticum).